The following is a 222-amino-acid chain: Thiamine-phosphate synthase (222 aa).

4-amino-2-methyl-5-(diphosphooxymethyl)pyrimidine is bound by residues 44–48 (QVRMK) and Asn-75. Mg(2+) is bound by residues Asp-76 and Asp-95. 4-amino-2-methyl-5-(diphosphooxymethyl)pyrimidine is bound at residue Thr-114. 140–142 (SRS) is a 2-[(2R,5Z)-2-carboxy-4-methylthiazol-5(2H)-ylidene]ethyl phosphate binding site. A 4-amino-2-methyl-5-(diphosphooxymethyl)pyrimidine-binding site is contributed by Lys-143. Position 171 (Gly-171) interacts with 2-[(2R,5Z)-2-carboxy-4-methylthiazol-5(2H)-ylidene]ethyl phosphate.

It belongs to the thiamine-phosphate synthase family. Mg(2+) serves as cofactor.

The enzyme catalyses 2-[(2R,5Z)-2-carboxy-4-methylthiazol-5(2H)-ylidene]ethyl phosphate + 4-amino-2-methyl-5-(diphosphooxymethyl)pyrimidine + 2 H(+) = thiamine phosphate + CO2 + diphosphate. It carries out the reaction 2-(2-carboxy-4-methylthiazol-5-yl)ethyl phosphate + 4-amino-2-methyl-5-(diphosphooxymethyl)pyrimidine + 2 H(+) = thiamine phosphate + CO2 + diphosphate. The catalysed reaction is 4-methyl-5-(2-phosphooxyethyl)-thiazole + 4-amino-2-methyl-5-(diphosphooxymethyl)pyrimidine + H(+) = thiamine phosphate + diphosphate. It participates in cofactor biosynthesis; thiamine diphosphate biosynthesis; thiamine phosphate from 4-amino-2-methyl-5-diphosphomethylpyrimidine and 4-methyl-5-(2-phosphoethyl)-thiazole: step 1/1. Its function is as follows. Condenses 4-methyl-5-(beta-hydroxyethyl)thiazole monophosphate (THZ-P) and 2-methyl-4-amino-5-hydroxymethyl pyrimidine pyrophosphate (HMP-PP) to form thiamine monophosphate (TMP). In Anaeromyxobacter dehalogenans (strain 2CP-C), this protein is Thiamine-phosphate synthase.